We begin with the raw amino-acid sequence, 313 residues long: Small ribosomal subunit protein uS2 (313 aa).

The segment covering 233–256 has biased composition (basic and acidic residues); it reads RTMTDKQSDVAKEAKADGKEEAPK. A disordered region spans residues 233–293; it reads RTMTDKQSDV…SRKLVAAGTA (61 aa).

The protein belongs to the universal ribosomal protein uS2 family.

This is Small ribosomal subunit protein uS2 from Bdellovibrio bacteriovorus (strain ATCC 15356 / DSM 50701 / NCIMB 9529 / HD100).